Here is a 647-residue protein sequence, read N- to C-terminus: MPIIESSQSLLLDKDKLKRILLTIPSEPGCYLMRDKNETLLYIGKSKSLKSRVRSYFNTNNTALSPRISLMVRQVYDIEFILTDSDSEALNLESNLIKEHQPYFNILLKDDKKYPYLCITWSEEYPRIFITRRRRLRNSEDRYYGPYVDVTLLRKTLFLLKKLFPLRQRPRALYKDRTCLNYSINRCPGVCQRLIEPDDYHKTLKKVAMIFEGRTDQLKDLLHKQMLIQSKLQEFEKAAIIRDQIKGIEQLYAAQKMTIPDSTVSRDVLGLSIDSNVCCVQLFQMRAGKLVGRIGFVYNSLELRSELILQKVLEEYYSQIDNVTIPPEILLQSSIPQQSYFEQWLSELRGSQVKIVIPKRKEKAELVKLVKRNADIELERVKDGQSKHLIELEDLTQVLDLAFVPRRIEGYDISHLAGTEVVGSQVVFIEGIPAKQHYRKYAIKSSSISSGHSDDYMALAEVIRRRFRRWSKYKADGLDLTELRNKKLSSLDPLIITDWPDLIMIDGGKGQLKAVEEALRQLGLDSDINVCSLAKRNEEIFVPGSYNKLDTEKNQPGLLLLRRLRDEAHRFAINFHRKKRSLSMKRSQLIDIPGVGPRRIKSLLAHFKSVQAIQLATEKEIASVEGLGTETASIIFKYFNPIERDIV.

The GIY-YIG domain occupies 26 to 106 (SEPGCYLMRD…IKEHQPYFNI (81 aa)). The 36-residue stretch at 216–251 (DQLKDLLHKQMLIQSKLQEFEKAAIIRDQIKGIEQL) folds into the UVR domain.

Belongs to the UvrC family. As to quaternary structure, interacts with UvrB in an incision complex.

Its subcellular location is the cytoplasm. The UvrABC repair system catalyzes the recognition and processing of DNA lesions. UvrC both incises the 5' and 3' sides of the lesion. The N-terminal half is responsible for the 3' incision and the C-terminal half is responsible for the 5' incision. In Prochlorococcus marinus (strain MIT 9211), this protein is UvrABC system protein C.